A 293-amino-acid chain; its full sequence is Phosphoribosylaminoimidazole-succinocarboxamide synthase (293 aa).

It belongs to the SAICAR synthetase family.

It catalyses the reaction 5-amino-1-(5-phospho-D-ribosyl)imidazole-4-carboxylate + L-aspartate + ATP = (2S)-2-[5-amino-1-(5-phospho-beta-D-ribosyl)imidazole-4-carboxamido]succinate + ADP + phosphate + 2 H(+). Its pathway is purine metabolism; IMP biosynthesis via de novo pathway; 5-amino-1-(5-phospho-D-ribosyl)imidazole-4-carboxamide from 5-amino-1-(5-phospho-D-ribosyl)imidazole-4-carboxylate: step 1/2. This Desulfosudis oleivorans (strain DSM 6200 / JCM 39069 / Hxd3) (Desulfococcus oleovorans) protein is Phosphoribosylaminoimidazole-succinocarboxamide synthase.